The chain runs to 726 residues: Endo-1,4-beta-xylanase/feruloyl esterase (726 aa).

The signal sequence occupies residues 1-19 (MKKLLVALSLIAGSLTASA). The GH10 domain occupies 27–369 (YAAGPGLKDA…KRSLQIIRDF (343 aa)). E161 (proton donor; for xylanase activity) is an active-site residue. E280 acts as the Nucleophile; for xylanase activity in catalysis. The segment at 370–726 (DAAMDNRKPK…LEKMAQSLFK (357 aa)) is feruloyl esterase. S629 acts as the Nucleophile; for esterase activity in catalysis.

It in the N-terminal section; belongs to the glycosyl hydrolase 10 (cellulase F) family. As to quaternary structure, monomer or homodimer.

It carries out the reaction Endohydrolysis of (1-&gt;4)-beta-D-xylosidic linkages in xylans.. It catalyses the reaction feruloyl-polysaccharide + H2O = ferulate + polysaccharide.. It functions in the pathway glycan degradation; xylan degradation. In terms of biological role, involved in degradation of plant cell wall polysaccharides. Has endo-xylanase activity towards substrates such as oat spelt xylan (OSX), acetylated xylo-oligosaccharides and acetylated xylan, producing primarily xylobiose; cannot hydrolyze xylobiose to xylose. Also has feruloyl esterase activity, releasing ferulic acid from methylferulate, and from the more natural substrates wheat bran, corn fiber, and XOS(FA,Ac), a corn fiber-derived substrate enriched in O-acetyl and ferulic acid esters. Exhibits negligible acetyl esterase activity on sugar acetates. Acts synergistically with Xyl3A to increase the release of xylose from xylan. Does not possess endoglucanase or mannanase activities since it is not able to hydrolyze carboxymethyl cellulose and locust bean gum. The polypeptide is Endo-1,4-beta-xylanase/feruloyl esterase (Xylanibacter ruminicola (strain ATCC 19189 / DSM 19721 / CIP 105475 / JCM 8958 / 23) (Prevotella ruminicola)).